We begin with the raw amino-acid sequence, 546 residues long: MARYIFITGGVVSSLGKGLASAALGALLQARGYKVRLRKLDPYLNVDPGTMSPYQHGEVFVTDDGAETDLDLGHYERFTGVSATRADNITTGQIYKTIIEKERRGDYLGATVQVIPHVTGEIKDFVLSDPGPDVDFVLIEVGGTVGDIEGLPFFEAIRQLGQELPRGHACYIHLTLLPFIKTAGEMKTKPTQHSVKELRSIGIQPDILLCRTEFPIPEGERRKIAQFCNVRPSAVIQAMDSANIYAVPLDYHHEGLDTEVLDVFGLLDQAPKPDLTRWEEISHRLSHPDGEVNIAIVGKYTGLTDAYKSLVEALVHGGVANNVRVKFDWIEGEAFEKDEDLIAVRLANVHGVLVPGAFGERGSEGMIRAVQFAREHQIPYFGICFGMQMAMIEAARNLAGIRQASSTEFGPTSEPIVGLMTEWTRGNEKQVRAEGGELGGTMRCGAYDAVLAPGSRVAEIYGSTAIQERHRHRYEVNIGYRERIEATGLKFTGLSPDGQLPEICERADHPWFVGVQYHPELKSRPFDPHPLFASFIGAAKERSRLV.

Positions 1–266 (MARYIFITGG…DTEVLDVFGL (266 aa)) are amidoligase domain. S13 provides a ligand contact to CTP. S13 provides a ligand contact to UTP. An ATP-binding site is contributed by 14–19 (SLGKGL). Y54 lines the L-glutamine pocket. D71 provides a ligand contact to ATP. Mg(2+) contacts are provided by D71 and E140. CTP-binding positions include 147–149 (DIE), 187–192 (KTKPTQ), and K223. UTP is bound by residues 187-192 (KTKPTQ) and K223. The Glutamine amidotransferase type-1 domain occupies 293–545 (NIAIVGKYTG…IGAAKERSRL (253 aa)). L-glutamine is bound at residue A357. The active-site Nucleophile; for glutamine hydrolysis is C384. Residues 385 to 388 (FGMQ), E408, and R473 contribute to the L-glutamine site. Active-site residues include H518 and E520.

This sequence belongs to the CTP synthase family. As to quaternary structure, homotetramer.

It catalyses the reaction UTP + L-glutamine + ATP + H2O = CTP + L-glutamate + ADP + phosphate + 2 H(+). The enzyme catalyses L-glutamine + H2O = L-glutamate + NH4(+). It carries out the reaction UTP + NH4(+) + ATP = CTP + ADP + phosphate + 2 H(+). The protein operates within pyrimidine metabolism; CTP biosynthesis via de novo pathway; CTP from UDP: step 2/2. Its activity is regulated as follows. Allosterically activated by GTP, when glutamine is the substrate; GTP has no effect on the reaction when ammonia is the substrate. The allosteric effector GTP functions by stabilizing the protein conformation that binds the tetrahedral intermediate(s) formed during glutamine hydrolysis. Inhibited by the product CTP, via allosteric rather than competitive inhibition. Catalyzes the ATP-dependent amination of UTP to CTP with either L-glutamine or ammonia as the source of nitrogen. Regulates intracellular CTP levels through interactions with the four ribonucleotide triphosphates. This is CTP synthase from Phenylobacterium zucineum (strain HLK1).